Here is a 454-residue protein sequence, read N- to C-terminus: Metalloprotease MTH_856 (454 aa).

Residues 92–115 (QVGSGAPSVDKTMVRSSRPPSDVP) are disordered.

It belongs to the peptidase U62 family.

Functionally, probable metalloprotease. The protein is Metalloprotease MTH_856 of Methanothermobacter thermautotrophicus (strain ATCC 29096 / DSM 1053 / JCM 10044 / NBRC 100330 / Delta H) (Methanobacterium thermoautotrophicum).